The following is a 394-amino-acid chain: General receptor for phosphoinositides 1-associated scaffold protein (394 aa).

Residues 1-51 are disordered; sequence MTLRRLRKLQQKEEATAAPDLAGRAPDSEAARAAPTPSGPPAAAAPPGAPG. Positions 37–49 are enriched in pro residues; sequence PSGPPAAAAPPGA. Phosphothreonine is present on T76. Residue S93 is modified to Phosphoserine. The 90-residue stretch at 100 to 189 folds into the PDZ domain; that stretch reads VLTLEKGDNQ…VLRLETLYGT (90 aa). An interaction with PSCD3 region spans residues 180-257; the sequence is VLRLETLYGT…GAGLLPGSLP (78 aa). The residue at position 236 (Y236) is a Phosphotyrosine. At R269 the chain carries Omega-N-methylarginine. The interval 293-318 is disordered; that stretch reads EPQALPPPPPPARAPGPGSAETPASV. Pro residues predominate over residues 296–306; that stretch reads ALPPPPPPARA. S386 carries the post-translational modification Phosphoserine.

Heteromer. Composed of TAMALIN, CYTH2 and at least one GRM1. Also interacts with CYTH3, GRM2, GRM3 and GRM5. As to expression, expressed in brain.

It localises to the cytoplasm. The protein resides in the perinuclear region. The protein localises to the cell membrane. It is found in the postsynaptic cell membrane. Plays a role in intracellular trafficking and contributes to the macromolecular organization of group 1 metabotropic glutamate receptors (mGluRs) at synapses. This chain is General receptor for phosphoinositides 1-associated scaffold protein, found in Rattus norvegicus (Rat).